Consider the following 250-residue polypeptide: Copper homeostasis protein cutC homolog (250 aa).

It belongs to the CutC family.

In terms of biological role, involved in copper homeostasis. Affects body morphology and length, egg laying and brood size. The sequence is that of Copper homeostasis protein cutC homolog (cutc-1) from Caenorhabditis elegans.